The following is a 375-amino-acid chain: Chaperone protein DnaJ (375 aa).

The J domain occupies 5–70 (DYYEVLGVAR…NKRRAYDAHG (66 aa)). The CR-type zinc finger occupies 131-208 (GIERRIEIPT…CHGAGRVEED (78 aa)). Zn(2+)-binding residues include cysteine 144, cysteine 147, cysteine 160, cysteine 163, cysteine 182, cysteine 185, cysteine 196, and cysteine 199. CXXCXGXG motif repeat units follow at residues 144–151 (CAPCHGSG), 160–167 (CGTCHGRG), 182–189 (CPHCDGRG), and 196–203 (CKTCHGAG).

It belongs to the DnaJ family. As to quaternary structure, homodimer. The cofactor is Zn(2+).

The protein localises to the cytoplasm. Functionally, participates actively in the response to hyperosmotic and heat shock by preventing the aggregation of stress-denatured proteins and by disaggregating proteins, also in an autonomous, DnaK-independent fashion. Unfolded proteins bind initially to DnaJ; upon interaction with the DnaJ-bound protein, DnaK hydrolyzes its bound ATP, resulting in the formation of a stable complex. GrpE releases ADP from DnaK; ATP binding to DnaK triggers the release of the substrate protein, thus completing the reaction cycle. Several rounds of ATP-dependent interactions between DnaJ, DnaK and GrpE are required for fully efficient folding. Also involved, together with DnaK and GrpE, in the DNA replication of plasmids through activation of initiation proteins. This is Chaperone protein DnaJ from Xanthomonas axonopodis pv. citri (strain 306).